The primary structure comprises 149 residues: Protegrin-3 (149 aa).

The first 29 residues, Met-1–Ala-29, serve as a signal peptide directing secretion. A propeptide spanning residues Gln-30–Val-130 is cleaved from the precursor. The tract at residues Asp-61–Val-80 is disordered. Disulfide bonds link Cys-85-Cys-96, Cys-107-Cys-124, Cys-136-Cys-145, and Cys-138-Cys-143. Arg-148 carries the arginine amide modification.

This sequence belongs to the cathelicidin family.

The protein localises to the secreted. Functionally, microbicidal activity. Active against E.coli, Listeria monocytogenes and C.albicans, in vitro. The polypeptide is Protegrin-3 (NPG3) (Sus scrofa (Pig)).